We begin with the raw amino-acid sequence, 274 residues long: Undecaprenyl-diphosphatase 1 (274 aa).

7 helical membrane-spanning segments follow: residues 47–67, 85–105, 113–133, 150–170, 196–216, 225–245, and 253–273; these read QVFL…LYFN, VSMW…GIPF, FYNY…FIMI, ITYT…VFPG, FFLA…KFGL, ILFI…KFLM, and FKAF…YFLI.

This sequence belongs to the UppP family.

It localises to the cell membrane. It catalyses the reaction di-trans,octa-cis-undecaprenyl diphosphate + H2O = di-trans,octa-cis-undecaprenyl phosphate + phosphate + H(+). Its function is as follows. Catalyzes the dephosphorylation of undecaprenyl diphosphate (UPP). Confers resistance to bacitracin. The chain is Undecaprenyl-diphosphatase 1 from Clostridium acetobutylicum (strain ATCC 824 / DSM 792 / JCM 1419 / IAM 19013 / LMG 5710 / NBRC 13948 / NRRL B-527 / VKM B-1787 / 2291 / W).